Consider the following 75-residue polypeptide: Putative snRNP Sm-like protein (75 aa).

In terms of domain architecture, Sm spans 4-75 (RPLDVIHRSL…NVLAISPTEE (72 aa)).

The protein belongs to the snRNP Sm proteins family.

In Pyrococcus horikoshii (strain ATCC 700860 / DSM 12428 / JCM 9974 / NBRC 100139 / OT-3), this protein is Putative snRNP Sm-like protein.